The following is a 536-amino-acid chain: Casein kinase I homolog RAG8 (536 aa).

Over residues 26 to 42 (HSTQVLHGSGQHGMQPS) the composition is skewed to polar residues. A disordered region spans residues 26–68 (HSTQVLHGSGQHGMQPSGNNVLNGLANGATGLQSSASSTSTRD). Positions 43–65 (GNNVLNGLANGATGLQSSASSTS) are enriched in low complexity. The Protein kinase domain maps to 77–361 (YKIGKKIGEG…QKLDGEYDWM (285 aa)). ATP contacts are provided by residues 83–91 (IGEGSFGVL) and Lys-106. Catalysis depends on Asp-196, which acts as the Proton acceptor. Polar residues-rich tracts occupy residues 407-420 (NNLN…QSHS) and 427-436 (DLTQGVSNAP). Positions 407-524 (NNLNGSNVPL…NGKVQVADSN (118 aa)) are disordered. Composition is skewed to low complexity over residues 437-453 (QQPQ…QHTQ) and 463-514 (AYKQ…NQPQ). S-palmitoyl cysteine attachment occurs at residues Cys-535 and Cys-536.

This sequence belongs to the protein kinase superfamily. CK1 Ser/Thr protein kinase family. Casein kinase I subfamily.

It catalyses the reaction L-seryl-[protein] + ATP = O-phospho-L-seryl-[protein] + ADP + H(+). It carries out the reaction L-threonyl-[protein] + ATP = O-phospho-L-threonyl-[protein] + ADP + H(+). In terms of biological role, casein kinases are operationally defined by their preferential utilization of acidic proteins such as caseins as substrates. In Kluyveromyces lactis (strain ATCC 8585 / CBS 2359 / DSM 70799 / NBRC 1267 / NRRL Y-1140 / WM37) (Yeast), this protein is Casein kinase I homolog RAG8 (RAG8).